Consider the following 776-residue polypeptide: DNA topoisomerase 1 (776 aa).

Residues 1 to 111 (MKLVIVESPA…VKSDDFFKRV (111 aa)) enclose the Toprim domain. Mg(2+)-binding residues include Glu7 and Asp80. One can recognise a Topo IA-type catalytic domain in the interval 132 to 568 (DANLVNAQQA…FWSGFNHNIE (437 aa)). The segment at 166–171 (SAGRVQ) is interaction with DNA. The active-site O-(5'-phospho-DNA)-tyrosine intermediate is the Tyr304. Residues 600–627 (CPSCKTGELSLKLGKFGAFLACSNYPEC) form a C4-type zinc finger.

This sequence belongs to the type IA topoisomerase family. As to quaternary structure, monomer. It depends on Mg(2+) as a cofactor.

The catalysed reaction is ATP-independent breakage of single-stranded DNA, followed by passage and rejoining.. Its function is as follows. Releases the supercoiling and torsional tension of DNA, which is introduced during the DNA replication and transcription, by transiently cleaving and rejoining one strand of the DNA duplex. Introduces a single-strand break via transesterification at a target site in duplex DNA. The scissile phosphodiester is attacked by the catalytic tyrosine of the enzyme, resulting in the formation of a DNA-(5'-phosphotyrosyl)-enzyme intermediate and the expulsion of a 3'-OH DNA strand. The free DNA strand then undergoes passage around the unbroken strand, thus removing DNA supercoils. Finally, in the religation step, the DNA 3'-OH attacks the covalent intermediate to expel the active-site tyrosine and restore the DNA phosphodiester backbone. The protein is DNA topoisomerase 1 of Rickettsia felis (strain ATCC VR-1525 / URRWXCal2) (Rickettsia azadi).